A 351-amino-acid polypeptide reads, in one-letter code: Beta-1,4-xylosyltransferase IRX9 (351 aa).

The Cytoplasmic portion of the chain corresponds to 1-16 (MGSLERSKKKAQVWKK). A helical; Signal-anchor for type II membrane protein membrane pass occupies residues 17-36 (AVIHFSLCFVMGFFTGFAPA). At 37-351 (GKASFFSNFE…KFPTRTRLST (315 aa)) the chain is on the lumenal side. Asparagine 64 and asparagine 74 each carry an N-linked (GlcNAc...) asparagine glycan. The interval 80–107 (SQSQAPAPAESREAEGETRSLSEKEDEN) is disordered. Basic and acidic residues predominate over residues 89-107 (ESREAEGETRSLSEKEDEN). Residues asparagine 271 and asparagine 287 are each glycosylated (N-linked (GlcNAc...) asparagine).

It belongs to the glycosyltransferase 43 family. As to expression, expressed in developing interfascicular fibers, primary and secondary xylem in stems and developing secondary xylem in roots.

Its subcellular location is the golgi apparatus membrane. It carries out the reaction [(1-&gt;4)-beta-D-xylan](n) + UDP-alpha-D-xylose = [(1-&gt;4)-beta-D-xylan](n+1) + UDP + H(+). Functionally, involved in the synthesis of the hemicellulose glucuronoxylan, a major component of secondary cell walls. Xylan xylosyltransferase that acts cooperatively with IRX14 to achieve the successive addition of xylosyl residues during xylan backbone elongation. In Arabidopsis thaliana (Mouse-ear cress), this protein is Beta-1,4-xylosyltransferase IRX9.